We begin with the raw amino-acid sequence, 388 residues long: Amylovoran biosynthesis protein AmsL (388 aa).

Helical transmembrane passes span V24–F44, L47–L67, F97–F117, F231–I251, F297–W317, and I359–I379.

Belongs to the polysaccharide synthase family.

It is found in the cell membrane. Its pathway is glycan metabolism; exopolysaccharide biosynthesis. Involved in the biosynthesis of amylovoran which functions as a virulence factor. The sequence is that of Amylovoran biosynthesis protein AmsL (amsL) from Erwinia amylovora (Fire blight bacteria).